The primary structure comprises 644 residues: Kelch-like protein 34 (644 aa).

In terms of domain architecture, BTB spans 29 to 96 (CDVTLETEGS…IYTAWLSLSM (68 aa)). The BACK domain maps to 131 to 238 (CCFAANVAAR…PADVLRRVYS (108 aa)). Residues 304–329 (AARGQVAAPEPEEEEEELEEEEEEEE) form a disordered region. The span at 313–329 (EPEEEEEELEEEEEEEE) shows a compositional bias: acidic residues. Kelch repeat units lie at residues 320–366 (ELEE…TAGN), 367–425 (FLFV…AVGE), 426–473 (RLLA…VGDR), 475–526 (VVYI…VLRG), 528–571 (VFAF…VVEE), and 573–623 (ALLL…VLQL).

In Homo sapiens (Human), this protein is Kelch-like protein 34 (KLHL34).